The following is a 159-amino-acid chain: Trafficking protein particle complex subunit 6A (159 aa).

Ser-33 bears the Phosphoserine mark.

The protein belongs to the TRAPP small subunits family. BET3 subfamily. Part of the multisubunit transport protein particle (TRAPP) complex. Heterodimer with TRAPPC3. The heterodimer TRAPPC3-TRAPPC6A interacts with TRAPPC2L. Interacts with TRAPPC2L.

Its subcellular location is the golgi apparatus. It localises to the cis-Golgi network. The protein localises to the endoplasmic reticulum. In terms of biological role, may play a role in vesicular transport during the biogenesis of melanosomes. This is Trafficking protein particle complex subunit 6A from Bos taurus (Bovine).